Here is a 332-residue protein sequence, read N- to C-terminus: Geranylgeranyl pyrophosphate synthase dpasD (332 aa).

Isopentenyl diphosphate-binding residues include Lys-55, Arg-58, and His-87. 2 residues coordinate Mg(2+): Asp-94 and Asp-98. A dimethylallyl diphosphate-binding site is contributed by Arg-103. Residue Arg-104 coordinates isopentenyl diphosphate. Dimethylallyl diphosphate-binding residues include Lys-181, Thr-182, and Gln-215. Asp-218 is a binding site for Mg(2+). Residues Asn-222, Lys-232, and Lys-242 each coordinate dimethylallyl diphosphate.

It belongs to the FPP/GGPP synthase family. Mg(2+) serves as cofactor.

The enzyme catalyses isopentenyl diphosphate + dimethylallyl diphosphate = (2E)-geranyl diphosphate + diphosphate. The catalysed reaction is isopentenyl diphosphate + (2E)-geranyl diphosphate = (2E,6E)-farnesyl diphosphate + diphosphate. It carries out the reaction isopentenyl diphosphate + (2E,6E)-farnesyl diphosphate = (2E,6E,10E)-geranylgeranyl diphosphate + diphosphate. It functions in the pathway secondary metabolite biosynthesis; terpenoid biosynthesis. Its function is as follows. Geranylgeranyl pyrophosphate synthase; part of the gene cluster that mediates the biosynthesis of the diterpenoid pyrones subglutinols A and B. The first step of the pathway is the synthesis of the alpha-pyrone moiety by the polyketide synthase dpasA via condensation of one acetyl-CoA starter unit with 3 malonyl-CoA units and 2 methylations. The alpha-pyrone is then combined with geranylgeranyl pyrophosphate (GGPP) formed by the GGPP synthase dpasD through the action of the prenyltransferase dpasC to yield a linear alpha-pyrone diterpenoid. Subsequent steps in the diterpenoid pyrone biosynthetic pathway involve the decalin core formation, which is initiated by the epoxidation of the C10-C11 olefin by the FAD-dependent oxidoreductase dpasE, and is followed by a cyclization cascade catalyzed by the terpene cyclase dpasB. The FAD-linked oxidoreductase dpasF is then involved in tetrahydrofuran (THF) ring formation at the C5 unit to complete the formation of subglutinols A and B. DpasF also possesses an additional catalytic ability of multi-step oxidations to generate a new DDP analog with an enone system at the C5 named FDDP A. In Apiospora sacchari (Arthrinium sacchari), this protein is Geranylgeranyl pyrophosphate synthase dpasD.